The chain runs to 287 residues: Neuferricin homolog (287 aa).

The signal sequence occupies residues M1–G22. The 86-residue stretch at G61–G146 folds into the Cytochrome b5 heme-binding domain. The stretch at Y175–N204 forms a coiled coil.

Belongs to the cytochrome b5 family. MAPR subfamily.

The protein localises to the secreted. Its function is as follows. Heme-binding protein. In Drosophila melanogaster (Fruit fly), this protein is Neuferricin homolog.